A 309-amino-acid chain; its full sequence is Homoserine O-succinyltransferase (309 aa).

Residue C142 is the Acyl-thioester intermediate of the active site. Residues K163 and S192 each coordinate substrate. H235 functions as the Proton acceptor in the catalytic mechanism. Residue E237 is part of the active site. Substrate is bound at residue R249.

Belongs to the MetA family.

The protein resides in the cytoplasm. The catalysed reaction is L-homoserine + succinyl-CoA = O-succinyl-L-homoserine + CoA. It functions in the pathway amino-acid biosynthesis; L-methionine biosynthesis via de novo pathway; O-succinyl-L-homoserine from L-homoserine: step 1/1. Functionally, transfers a succinyl group from succinyl-CoA to L-homoserine, forming succinyl-L-homoserine. The sequence is that of Homoserine O-succinyltransferase from Yersinia enterocolitica serotype O:8 / biotype 1B (strain NCTC 13174 / 8081).